A 356-amino-acid polypeptide reads, in one-letter code: Acyl-coenzyme A diphosphatase NUDT19 (356 aa).

The Nudix hydrolase domain maps to 10 to 241 (AATVMLAAGW…IWLAPPQFYE (232 aa)). Residues 72–94 (PRFGLGPEPPRQPPFPGLSHGDA) form a disordered region. Positions 78–87 (PEPPRQPPFP) are enriched in pro residues. The short motif at 97 to 118 (AALPDDVALRICAIRETFEEAG) is the Nudix box element. The Mg(2+) site is built by glutamate 112 and glutamate 116. Lysine 299 is subject to N6-succinyllysine. A Microbody targeting signal motif is present at residues 354 to 356 (ARL).

This sequence belongs to the Nudix hydrolase family. In terms of assembly, monomer. Requires Mg(2+) as cofactor. It depends on Mn(2+) as a cofactor.

Its subcellular location is the peroxisome. The catalysed reaction is an acyl-CoA + H2O = an acyl-4'-phosphopantetheine + adenosine 3',5'-bisphosphate + 2 H(+). It catalyses the reaction CoA + H2O = (R)-4'-phosphopantetheine + adenosine 3',5'-bisphosphate + 2 H(+). It carries out the reaction hexanoyl-CoA + H2O = hexanoyl-4'-phosphopantetheine + adenosine 3',5'-bisphosphate + 2 H(+). The enzyme catalyses octanoyl-CoA + H2O = S-octanoyl-4'-phosphopantetheine + adenosine 3',5'-bisphosphate + 2 H(+). The catalysed reaction is butanoyl-CoA + H2O = S-butanoyl-4'-phosphopantetheine + adenosine 3',5'-bisphosphate + 2 H(+). It catalyses the reaction propanoyl-CoA + H2O = propanoyl-4'-phosphopantetheine + adenosine 3',5'-bisphosphate + 2 H(+). It carries out the reaction malonyl-CoA + H2O = malonyl-4'-phosphopantetheine + adenosine 3',5'-bisphosphate + 2 H(+). The enzyme catalyses succinyl-CoA + H2O = succinyl-4'-phosphopantetheine + adenosine 3',5'-bisphosphate + 2 H(+). The catalysed reaction is choloyl-CoA + H2O = S-choloyl-4'-phosphopantetheine + adenosine 3',5'-bisphosphate + 2 H(+). It catalyses the reaction 4,8-dimethylnonanoyl-CoA + H2O = S-(4,8-dimethylnonanoyl)-4'-phosphopantetheine + adenosine 3',5'-bisphosphate + 2 H(+). It carries out the reaction (9Z,12Z,15Z)-octadecatrienoyl-CoA + H2O = S-(9Z,12Z,15Z-octadecatrienoyl)-4'-phosphopantetheine + adenosine 3',5'-bisphosphate + 2 H(+). The enzyme catalyses (9Z,12Z)-octadecadienoyl-CoA + H2O = S-(9Z,12Z-octadecadienoyl)-4'-phosphopantetheine + adenosine 3',5'-bisphosphate + 2 H(+). The catalysed reaction is (9Z)-hexadecenoyl-CoA + H2O = S-(9Z-hexadecenoyl)-4'-phosphopantetheine + adenosine 3',5'-bisphosphate + 2 H(+). It catalyses the reaction (9Z)-tetradecenoyl-CoA + H2O = S-(9Z-tetradecenoyl)-4'-phosphopantetheine + adenosine 3',5'-bisphosphate + 2 H(+). It carries out the reaction (6Z)-octenoyl-CoA + H2O = S-(6Z-octenoyl)-4'-phosphopantetheine + adenosine 3',5'-bisphosphate + 2 H(+). The enzyme catalyses hexadecanoyl-CoA + H2O = S-hexadecanoyl-4'-phosphopantetheine + adenosine 3',5'-bisphosphate + 2 H(+). The catalysed reaction is tetradecanoyl-CoA + H2O = tetradecanoyl-4'-phosphopantetheine + adenosine 3',5'-bisphosphate + 2 H(+). It catalyses the reaction dodecanoyl-CoA + H2O = S-dodecanoyl-4'-phosphopantetheine + adenosine 3',5'-bisphosphate + 2 H(+). It carries out the reaction a 5'-end CoA-ribonucleoside in mRNA + H2O = a 5'-end phospho-adenosine-phospho-ribonucleoside in mRNA + (R)-4'-phosphopantetheine + 2 H(+). Functionally, fatty acyl-coenzyme A (CoA) diphosphatase that hydrolyzes fatty acyl-CoA to yield acyl-4'-phosphopantetheine and adenosine 3',5'-bisphosphate. Mediates the hydrolysis of a wide range of CoA esters, including choloyl-CoA and branched-chain fatty-acyl-CoA esters and at low substrate concentrations medium and long-chain fatty-acyl-CoA esters are the primary substrates. Highest activity seen with medium-chain acyl-CoA esters and higher rates of activity seen with the unsaturated acyl-CoA esters compared with the saturated esters. Exhibits decapping activity towards dpCoA-capped RNAs in vitro. The chain is Acyl-coenzyme A diphosphatase NUDT19 (Nudt19) from Mus saxicola (Brown spiny mouse).